The chain runs to 197 residues: ATP-dependent Clp protease proteolytic subunit (197 aa).

Catalysis depends on Ser-98, which acts as the Nucleophile. His-123 is a catalytic residue.

It belongs to the peptidase S14 family. In terms of assembly, fourteen ClpP subunits assemble into 2 heptameric rings which stack back to back to give a disk-like structure with a central cavity, resembling the structure of eukaryotic proteasomes.

The protein localises to the cytoplasm. The catalysed reaction is Hydrolysis of proteins to small peptides in the presence of ATP and magnesium. alpha-casein is the usual test substrate. In the absence of ATP, only oligopeptides shorter than five residues are hydrolyzed (such as succinyl-Leu-Tyr-|-NHMec, and Leu-Tyr-Leu-|-Tyr-Trp, in which cleavage of the -Tyr-|-Leu- and -Tyr-|-Trp bonds also occurs).. In terms of biological role, cleaves peptides in various proteins in a process that requires ATP hydrolysis. Has a chymotrypsin-like activity. Plays a major role in the degradation of misfolded proteins. This chain is ATP-dependent Clp protease proteolytic subunit, found in Haemophilus ducreyi (strain 35000HP / ATCC 700724).